A 647-amino-acid polypeptide reads, in one-letter code: Threonine--tRNA ligase (647 aa).

Residues Met-1–Thr-61 enclose the TGS domain. The segment at Asp-242–Pro-540 is catalytic. Positions 336, 387, and 517 each coordinate Zn(2+).

It belongs to the class-II aminoacyl-tRNA synthetase family. As to quaternary structure, homodimer. It depends on Zn(2+) as a cofactor.

The protein localises to the cytoplasm. It catalyses the reaction tRNA(Thr) + L-threonine + ATP = L-threonyl-tRNA(Thr) + AMP + diphosphate + H(+). In terms of biological role, catalyzes the attachment of threonine to tRNA(Thr) in a two-step reaction: L-threonine is first activated by ATP to form Thr-AMP and then transferred to the acceptor end of tRNA(Thr). Also edits incorrectly charged L-seryl-tRNA(Thr). The polypeptide is Threonine--tRNA ligase (Streptococcus pneumoniae (strain 70585)).